Consider the following 443-residue polypeptide: FLYWCH-type zinc finger-containing protein peb-1 (443 aa).

The disordered stretch occupies residues 22-49 (KPGSSDISSSSTDTSAISPISVSSMPLS). Positions 25-42 (SSDISSSSTDTSAISPIS) are enriched in low complexity. The required for DNA-binding DNA-binding region spans 46–203 (MPLSPDKEKK…RNKDGKPKKP (158 aa)). An FLYWCH-type zinc finger spans residues 69–135 (IVTSFKGYQK…NACTKGSHNH (67 aa)). The tract at residues 251–271 (PTIQIPQPIPTPIQHQQQEQS) is disordered.

The protein resides in the nucleus. In terms of biological role, putative transcription factor. Binds to specific sequence motif 5'-[TC][AGT]TGCC[GA][AT]-3' in regulatory elements of target genes such as myosin myo-2. May modulate gene expression, perhaps acting in opposition to transcription factor pha-4. Involved in morphogenesis, perhaps especially in formation of the pharynx. Plays roles in molting, feeding and morphology. This is FLYWCH-type zinc finger-containing protein peb-1 from Caenorhabditis elegans.